The following is a 276-amino-acid chain: Rhomboid protease GlpG (276 aa).

A run of 6 helical transmembrane segments spans residues 94–114 (GPVT…MQIL), 142–162 (ALMH…WYLG), 169–189 (LGSG…GYVQ), 192–212 (FSGP…GYVW), 229–249 (LIIF…GMSM), and 250–270 (ANGA…VDSL). S201 functions as the Nucleophile in the catalytic mechanism. H254 is a catalytic residue.

This sequence belongs to the peptidase S54 family.

Its subcellular location is the cell inner membrane. It catalyses the reaction Cleaves type-1 transmembrane domains using a catalytic dyad composed of serine and histidine that are contributed by different transmembrane domains.. In terms of biological role, rhomboid-type serine protease that catalyzes intramembrane proteolysis. This chain is Rhomboid protease GlpG, found in Escherichia coli O7:K1 (strain IAI39 / ExPEC).